Here is a 279-residue protein sequence, read N- to C-terminus: Formamidopyrimidine-DNA glycosylase (279 aa).

The active-site Schiff-base intermediate with DNA is the Pro2. Catalysis depends on Glu3, which acts as the Proton donor. Lys57 (proton donor; for beta-elimination activity) is an active-site residue. The DNA site is built by His90, Arg109, and Arg151. The FPG-type zinc-finger motif lies at 236–270 (FVYGRTGQPCRVCQTPIAVLRLGQRSTFYCPACQQ). Arg260 acts as the Proton donor; for delta-elimination activity in catalysis.

The protein belongs to the FPG family. In terms of assembly, monomer. It depends on Zn(2+) as a cofactor.

The catalysed reaction is Hydrolysis of DNA containing ring-opened 7-methylguanine residues, releasing 2,6-diamino-4-hydroxy-5-(N-methyl)formamidopyrimidine.. The enzyme catalyses 2'-deoxyribonucleotide-(2'-deoxyribose 5'-phosphate)-2'-deoxyribonucleotide-DNA = a 3'-end 2'-deoxyribonucleotide-(2,3-dehydro-2,3-deoxyribose 5'-phosphate)-DNA + a 5'-end 5'-phospho-2'-deoxyribonucleoside-DNA + H(+). Its function is as follows. Involved in base excision repair of DNA damaged by oxidation or by mutagenic agents. Acts as a DNA glycosylase that recognizes and removes damaged bases. Has a preference for oxidized purines, such as 7,8-dihydro-8-oxoguanine (8-oxoG). Has AP (apurinic/apyrimidinic) lyase activity and introduces nicks in the DNA strand. Cleaves the DNA backbone by beta-delta elimination to generate a single-strand break at the site of the removed base with both 3'- and 5'-phosphates. In Methylobacillus flagellatus (strain ATCC 51484 / DSM 6875 / VKM B-1610 / KT), this protein is Formamidopyrimidine-DNA glycosylase.